A 20-amino-acid polypeptide reads, in one-letter code: Pregnancy-associated glycoprotein 73B (20 aa).

It belongs to the peptidase A1 family. In terms of processing, N-glycosylated. As to expression, expressed in chorionic epithelium (trophectoderm).

The protein resides in the secreted. Its subcellular location is the extracellular space. This is Pregnancy-associated glycoprotein 73B from Bubalus bubalis (Domestic water buffalo).